Consider the following 99-residue polypeptide: Large ribosomal subunit protein uL23 (99 aa).

The protein belongs to the universal ribosomal protein uL23 family. In terms of assembly, part of the 50S ribosomal subunit. Contacts protein L29, and trigger factor when it is bound to the ribosome.

Its function is as follows. One of the early assembly proteins it binds 23S rRNA. One of the proteins that surrounds the polypeptide exit tunnel on the outside of the ribosome. Forms the main docking site for trigger factor binding to the ribosome. The sequence is that of Large ribosomal subunit protein uL23 from Francisella tularensis subsp. holarctica (strain OSU18).